Reading from the N-terminus, the 436-residue chain is Serine--tRNA ligase (436 aa).

239–241 provides a ligand contact to L-serine; the sequence is TAE. 270-272 contacts ATP; sequence RKE. Glu293 contacts L-serine. Residue 357–360 participates in ATP binding; sequence EISS. L-serine is bound at residue Ser392.

The protein belongs to the class-II aminoacyl-tRNA synthetase family. Type-1 seryl-tRNA synthetase subfamily. Homodimer. The tRNA molecule binds across the dimer.

The protein localises to the cytoplasm. It catalyses the reaction tRNA(Ser) + L-serine + ATP = L-seryl-tRNA(Ser) + AMP + diphosphate + H(+). The catalysed reaction is tRNA(Sec) + L-serine + ATP = L-seryl-tRNA(Sec) + AMP + diphosphate + H(+). It participates in aminoacyl-tRNA biosynthesis; selenocysteinyl-tRNA(Sec) biosynthesis; L-seryl-tRNA(Sec) from L-serine and tRNA(Sec): step 1/1. Functionally, catalyzes the attachment of serine to tRNA(Ser). Is also able to aminoacylate tRNA(Sec) with serine, to form the misacylated tRNA L-seryl-tRNA(Sec), which will be further converted into selenocysteinyl-tRNA(Sec). The polypeptide is Serine--tRNA ligase (Leuconostoc citreum (strain KM20)).